The following is a 173-amino-acid chain: Flagellar assembly factor FliW (173 aa).

Residues 152 to 173 (STTVRRKASPPAAGEDKGDVQE) are disordered.

It belongs to the FliW family. In terms of assembly, interacts with translational regulator CsrA and flagellin(s).

Its subcellular location is the cytoplasm. Acts as an anti-CsrA protein, binds CsrA and prevents it from repressing translation of its target genes, one of which is flagellin. Binds to flagellin and participates in the assembly of the flagellum. The sequence is that of Flagellar assembly factor FliW from Nitratidesulfovibrio vulgaris (strain ATCC 29579 / DSM 644 / CCUG 34227 / NCIMB 8303 / VKM B-1760 / Hildenborough) (Desulfovibrio vulgaris).